A 626-amino-acid chain; its full sequence is Mitogen-activated protein kinase kinase kinase 3 (626 aa).

Residues D44 to Q123 form the PB1 domain. Polar residues-rich tracts occupy residues Q146–Y155, L165–R174, and S219–D232. Disordered stretches follow at residues Q146–E184 and S218–E262. S147 bears the Phosphoserine mark. Position 166 is a phosphoserine; by SGK1 (S166). Residues S250 and S312 each carry the phosphoserine modification. Phosphoserine; by SGK1 is present on S337. Position 340 is a phosphoserine (S340). Residues W362–A622 enclose the Protein kinase domain. ATP-binding positions include L368–V376 and K391. The active-site Proton acceptor is the D489.

Belongs to the protein kinase superfamily. STE Ser/Thr protein kinase family. MAP kinase kinase kinase subfamily. In terms of assembly, binds both upstream activators and downstream substrates in multimolecular complexes. Part of a complex with MAP2K3, RAC1 and CCM2. Interacts with MAP2K5 and SPAG9. The cofactor is Mg(2+). In terms of processing, phosphorylation at Ser-166 and Ser-337 by SGK1 inhibits its activity.

The enzyme catalyses L-seryl-[protein] + ATP = O-phospho-L-seryl-[protein] + ADP + H(+). It catalyses the reaction L-threonyl-[protein] + ATP = O-phospho-L-threonyl-[protein] + ADP + H(+). Activated by phosphorylation on Thr-530. Its function is as follows. Component of a protein kinase signal transduction cascade. Mediates activation of the NF-kappa-B, AP1 and DDIT3 transcriptional regulators. The protein is Mitogen-activated protein kinase kinase kinase 3 (MAP3K3) of Homo sapiens (Human).